The sequence spans 127 residues: Fluoride-specific ion channel FluC (127 aa).

The next 4 membrane-spanning stretches (helical) occupy residues 4–24 (SLLAIGLGAMVGAWLRWGLGM), 35–55 (PGTLLANLIGGYIIGLAIAFF), 68–88 (LLITGFCGGLTTFSTFSAEVV), and 96–116 (ILWALGSIALHVSGSLLMTAA). The Na(+) site is built by G75 and T78.

It belongs to the fluoride channel Fluc/FEX (TC 1.A.43) family.

It is found in the cell inner membrane. The catalysed reaction is fluoride(in) = fluoride(out). With respect to regulation, na(+) is not transported, but it plays an essential structural role and its presence is essential for fluoride channel function. Fluoride-specific ion channel. Important for reducing fluoride concentration in the cell, thus reducing its toxicity. The protein is Fluoride-specific ion channel FluC of Pseudomonas putida (strain W619).